The primary structure comprises 186 residues: dCTP deaminase (186 aa).

Lys-107 to Arg-112 contacts dCTP. The Proton donor/acceptor role is filled by Glu-133. DCTP-binding residues include Gln-152, Tyr-166, and Gln-176.

This sequence belongs to the dCTP deaminase family. Homotrimer.

The enzyme catalyses dCTP + H2O + H(+) = dUTP + NH4(+). The protein operates within pyrimidine metabolism; dUMP biosynthesis; dUMP from dCTP (dUTP route): step 1/2. Functionally, catalyzes the deamination of dCTP to dUTP. The polypeptide is dCTP deaminase (Campylobacter jejuni subsp. jejuni serotype O:6 (strain 81116 / NCTC 11828)).